We begin with the raw amino-acid sequence, 303 residues long: Small ribosomal subunit protein uS2 (303 aa).

The interval 267-303 (AESLSMAEEPAPPSQRKGPASETAEPVAEPAVTESGS) is disordered.

The protein belongs to the universal ribosomal protein uS2 family.

This chain is Small ribosomal subunit protein uS2, found in Solibacter usitatus (strain Ellin6076).